We begin with the raw amino-acid sequence, 203 residues long: Ribonuclease HII (203 aa).

The 188-residue stretch at 16 to 203 (ENIACCDEVG…HRKSFLNKIL (188 aa)) folds into the RNase H type-2 domain. The a divalent metal cation site is built by D22, E23, and D120.

This sequence belongs to the RNase HII family. The cofactor is Mn(2+). Requires Mg(2+) as cofactor.

It localises to the cytoplasm. The enzyme catalyses Endonucleolytic cleavage to 5'-phosphomonoester.. In terms of biological role, endonuclease that specifically degrades the RNA of RNA-DNA hybrids. In Alkaliphilus oremlandii (strain OhILAs) (Clostridium oremlandii (strain OhILAs)), this protein is Ribonuclease HII.